A 498-amino-acid chain; its full sequence is Lysine--tRNA ligase (498 aa).

Mg(2+)-binding residues include Glu-408 and Glu-415.

Belongs to the class-II aminoacyl-tRNA synthetase family. In terms of assembly, homodimer. It depends on Mg(2+) as a cofactor.

The protein localises to the cytoplasm. The catalysed reaction is tRNA(Lys) + L-lysine + ATP = L-lysyl-tRNA(Lys) + AMP + diphosphate. The polypeptide is Lysine--tRNA ligase (Listeria innocua serovar 6a (strain ATCC BAA-680 / CLIP 11262)).